Here is a 504-residue protein sequence, read N- to C-terminus: L-carnitine/gamma-butyrobetaine antiporter (504 aa).

A run of 12 helical transmembrane segments spans residues 10–30, 51–71, 92–112, 143–163, 195–215, 231–251, 263–283, 316–336, 347–367, 398–418, 446–466, and 475–495; these read IEPKVFFPPLIIVGILCWLTV, WGWAFEWYMVVMLFGWFWLVF, IFMMFASCTSAAVLFWGSIEI, GPLPWATYSFLSVAFAYFFFV, FYLVALIFAMGTSLGLATPLV, LDAIIITCWIILNAICVACGL, SYLSFLMLGWVFIVSGASFIM, WTVFYWAWWVIYAIQMSIFLA, LCFGMVLGLTASTWILWTVLG, WAALPLSTATMWGFFILCFIA, LLVRIGWSILVGIIGIVLLAL, and AIIAGGCPLFFVNIMVTLSFI.

Belongs to the BCCT transporter (TC 2.A.15) family. CaiT subfamily. In terms of assembly, homotrimer.

It localises to the cell inner membrane. The enzyme catalyses 4-(trimethylamino)butanoate(in) + (R)-carnitine(out) = 4-(trimethylamino)butanoate(out) + (R)-carnitine(in). Its pathway is amine and polyamine metabolism; carnitine metabolism. Its function is as follows. Catalyzes the exchange of L-carnitine for gamma-butyrobetaine. The polypeptide is L-carnitine/gamma-butyrobetaine antiporter (Escherichia coli (strain K12 / MC4100 / BW2952)).